A 398-amino-acid chain; its full sequence is Bifunctional enzyme IspD/IspF (398 aa).

The interval 1-234 (MTNSPRTAAI…SRLMAALGDI (234 aa)) is 2-C-methyl-D-erythritol 4-phosphate cytidylyltransferase. The interval 235 to 398 (RTGTGYDVHA…LPWGADGLAG (164 aa)) is 2-C-methyl-D-erythritol 2,4-cyclodiphosphate synthase. Residues D241 and H243 each contribute to the a divalent metal cation site. 4-CDP-2-C-methyl-D-erythritol 2-phosphate is bound by residues 241-243 (DVH) and 267-268 (HS). H275 contributes to the a divalent metal cation binding site. Residues 289-291 (DIG), 365-368 (TTSE), F372, and R375 contribute to the 4-CDP-2-C-methyl-D-erythritol 2-phosphate site.

The protein in the N-terminal section; belongs to the IspD/TarI cytidylyltransferase family. IspD subfamily. This sequence in the C-terminal section; belongs to the IspF family. A divalent metal cation is required as a cofactor.

The catalysed reaction is 2-C-methyl-D-erythritol 4-phosphate + CTP + H(+) = 4-CDP-2-C-methyl-D-erythritol + diphosphate. The enzyme catalyses 4-CDP-2-C-methyl-D-erythritol 2-phosphate = 2-C-methyl-D-erythritol 2,4-cyclic diphosphate + CMP. It participates in isoprenoid biosynthesis; isopentenyl diphosphate biosynthesis via DXP pathway; isopentenyl diphosphate from 1-deoxy-D-xylulose 5-phosphate: step 2/6. Its pathway is isoprenoid biosynthesis; isopentenyl diphosphate biosynthesis via DXP pathway; isopentenyl diphosphate from 1-deoxy-D-xylulose 5-phosphate: step 4/6. Bifunctional enzyme that catalyzes the formation of 4-diphosphocytidyl-2-C-methyl-D-erythritol from CTP and 2-C-methyl-D-erythritol 4-phosphate (MEP) (IspD), and catalyzes the conversion of 4-diphosphocytidyl-2-C-methyl-D-erythritol 2-phosphate (CDP-ME2P) to 2-C-methyl-D-erythritol 2,4-cyclodiphosphate (ME-CPP) with a corresponding release of cytidine 5-monophosphate (CMP) (IspF). The polypeptide is Bifunctional enzyme IspD/IspF (Rhodopseudomonas palustris (strain TIE-1)).